The following is a 113-amino-acid chain: Nucleoid-associated protein Csac_1593 (113 aa).

Belongs to the YbaB/EbfC family. As to quaternary structure, homodimer.

The protein localises to the cytoplasm. It localises to the nucleoid. Its function is as follows. Binds to DNA and alters its conformation. May be involved in regulation of gene expression, nucleoid organization and DNA protection. The protein is Nucleoid-associated protein Csac_1593 of Caldicellulosiruptor saccharolyticus (strain ATCC 43494 / DSM 8903 / Tp8T 6331).